The primary structure comprises 199 residues: Recombination protein RecR (199 aa).

A C4-type zinc finger spans residues 57-72 (CQQCRTFTEQNLCAIC). The Toprim domain occupies 81-176 (GMICVVEMPV…KVSRIAHGVP (96 aa)).

It belongs to the RecR family.

May play a role in DNA repair. It seems to be involved in an RecBC-independent recombinational process of DNA repair. It may act with RecF and RecO. This is Recombination protein RecR from Psychromonas ingrahamii (strain DSM 17664 / CCUG 51855 / 37).